A 562-amino-acid polypeptide reads, in one-letter code: Tetratricopeptide repeat protein 34 (562 aa).

The segment at 1–30 (MLHKKPQRANENGISQRKKPSDQDNSSVKE) is disordered. Basic and acidic residues predominate over residues 19 to 30 (KPSDQDNSSVKE). TPR repeat units lie at residues 51 to 84 (DVSR…SSQR), 175 to 208 (KDSL…EPYN), 210 to 242 (EALS…DASY), 304 to 337 (AHFH…NAID), 388 to 421 (FQAA…SNNN), 423 to 455 (KYLR…HSSH), 461 to 494 (AEDY…EHAS), and 509 to 542 (AGIF…DENN).

This chain is Tetratricopeptide repeat protein 34 (ttc34), found in Xenopus laevis (African clawed frog).